The primary structure comprises 363 residues: p21-activated protein kinase-interacting protein 1-like (363 aa).

WD repeat units follow at residues 38 to 75 (AHTA…EHGA), 78 to 116 (HHNG…CQQT), 119 to 158 (AHKG…SAFI), 200 to 238 (NNPK…CVCE), and 241 to 282 (AHEN…VQTS). Residues 309–363 (KEKSNTAVTASAVKDCDRPKKKKAQNETTDKEASETQVVHKKRKPETKQKKKKPS) form a disordered region. Basic and acidic residues predominate over residues 322-342 (KDCDRPKKKKAQNETTDKEAS). The span at 347–363 (VHKKRKPETKQKKKKPS) shows a compositional bias: basic residues.

The protein localises to the nucleus. It localises to the nucleolus. Functionally, negatively regulates the PAK1 kinase. PAK1 is a member of the PAK kinase family, which has been shown to play a positive role in the regulation of signaling pathways involving MAPK8 and RELA. PAK1 exists as an inactive homodimer, which is activated by binding of small GTPases such as CDC42 to an N-terminal regulatory domain. PAK1IP1 also binds to the N-terminus of PAK1, and inhibits the specific activation of PAK1 by CDC42. May be involved in ribosomal large subunit assembly. The protein is p21-activated protein kinase-interacting protein 1-like (pak1ip1) of Xenopus laevis (African clawed frog).